Here is a 582-residue protein sequence, read N- to C-terminus: Hydrogen peroxide stress regulator 1 (582 aa).

Disordered stretches follow at residues 24–55 (SPFA…HNSS), 107–154 (YPSA…GISK), 347–366 (TSYN…SGET), and 375–422 (NTSG…GGKS). Positions 107 to 125 (YPSASFSTSQHPSQVYNDG) are enriched in polar residues. Positions 126-143 (STLNSNNTTQQLNNNNGF) are enriched in low complexity. A compositionally biased stretch (polar residues) spans 375–392 (NTSGRSPNSMEATEQIGT). The C2H2-type 1 zinc-finger motif lies at 423–446 (FVCPECSKKFKRSEHLRRHIRSLH). The C2H2-type 2; atypical zinc-finger motif lies at 452–473 (FVCICGKRFSRRDNLRQHERLH).

The protein resides in the nucleus. In terms of biological role, transcription factor that globally supports gene expression in response to hydrogen peroxide. The sequence is that of Hydrogen peroxide stress regulator 1 (hsr1) from Schizosaccharomyces pombe (strain 972 / ATCC 24843) (Fission yeast).